The primary structure comprises 121 residues: MDNPMLLKSTTRHVRIFAGEIDRDGDLVPSQQVLTLDIDPDNEFNWNEDALQKVYRKFDELVEASSGADLTDYNLRRVGSDLEHYLRSLLQLGEISYNLSARVTNYSMGVPQVAIDDKQVS.

It belongs to the complex I NdhM subunit family. As to quaternary structure, NDH-1 can be composed of about 15 different subunits; different subcomplexes with different compositions have been identified which probably have different functions.

It localises to the cellular thylakoid membrane. It carries out the reaction a plastoquinone + NADH + (n+1) H(+)(in) = a plastoquinol + NAD(+) + n H(+)(out). The enzyme catalyses a plastoquinone + NADPH + (n+1) H(+)(in) = a plastoquinol + NADP(+) + n H(+)(out). In terms of biological role, NDH-1 shuttles electrons from an unknown electron donor, via FMN and iron-sulfur (Fe-S) centers, to quinones in the respiratory and/or the photosynthetic chain. The immediate electron acceptor for the enzyme in this species is believed to be plastoquinone. Couples the redox reaction to proton translocation, and thus conserves the redox energy in a proton gradient. Cyanobacterial NDH-1 also plays a role in inorganic carbon-concentration. This Nostoc punctiforme (strain ATCC 29133 / PCC 73102) protein is NAD(P)H-quinone oxidoreductase subunit M.